A 145-amino-acid polypeptide reads, in one-letter code: Large ribosomal subunit protein uL15 (145 aa).

The span at 1–13 (MIRSKRKINKLRG) shows a compositional bias: basic residues. The disordered stretch occupies residues 1–44 (MIRSKRKINKLRGSRSNGGGCTKKRRGAGNKGGRGNAGASKQHW).

The protein belongs to the universal ribosomal protein uL15 family. Part of the 50S ribosomal subunit.

Functionally, binds to the 23S rRNA. The sequence is that of Large ribosomal subunit protein uL15 from Methanobrevibacter smithii (strain ATCC 35061 / DSM 861 / OCM 144 / PS).